The sequence spans 343 residues: Mas-related G-protein coupled receptor member F (343 aa).

Over 1–44 (MAGNCSWEAHPGNRNKMCPGLSEAPELYSRGFLTIEQIAMLPPP) the chain is Extracellular. Residue N4 is glycosylated (N-linked (GlcNAc...) asparagine). Residues 45–66 (AVMNYIFLLLCLCGLVGNGLVL) traverse the membrane as a helical segment. Residues 67–82 (WFFGFSIKRNPFSIYF) are Cytoplasmic-facing. Residues 83-104 (LHLASADVGYLFSKAVFSILNT) form a helical membrane-spanning segment. Residues 105-123 (GGFLGTFADYIRSVCRVLG) are Extracellular-facing. The helical transmembrane segment at 124-144 (LCMFLTGVSLLPAVSAERCAS) threads the bilayer. Residues 145-160 (VIFPAWYWRRRPKRLS) lie on the Cytoplasmic side of the membrane. A helical membrane pass occupies residues 161–181 (AVVCALLWVLSLLVTCLHNYF). Residues 182-198 (CVFLGRGAPGAACRHMD) lie on the Extracellular side of the membrane. Residues 199–220 (IFLGILLFLLCCPLMVLPCLAL) form a helical membrane-spanning segment. The Cytoplasmic segment spans residues 221–241 (ILHVECRARRRQRSAKLNHVI). A helical membrane pass occupies residues 242–263 (LAMVSVFLVSSIYLGIDWFLFW). Residues 264–273 (VFQIPAPFPE) lie on the Extracellular side of the membrane. The chain crosses the membrane as a helical span at residues 274 to 294 (YVTDLCICINSSAKPIVYFLA). The Cytoplasmic portion of the chain corresponds to 295-343 (GRDKSQRLWEPLRVVFQRALRDGAELGEAGGSTPNTVTMEMQCPPGNAS). The interval 320–343 (LGEAGGSTPNTVTMEMQCPPGNAS) is disordered.

Belongs to the G-protein coupled receptor 1 family. Mas subfamily.

The protein resides in the cell membrane. Its function is as follows. Orphan receptor. May bind to a neuropeptide and may regulate nociceptor function and/or development, including the sensation or modulation of pain. The chain is Mas-related G-protein coupled receptor member F (MRGPRF) from Homo sapiens (Human).